The sequence spans 347 residues: 4-hydroxy-2-oxovalerate aldolase (347 aa).

A Pyruvate carboxyltransferase domain is found at Pro11–Leu262. Arg19–Asp20 provides a ligand contact to substrate. Asp20 is a binding site for Mn(2+). His23 serves as the catalytic Proton acceptor. Substrate-binding residues include Ser173 and His201. The Mn(2+) site is built by His201 and His203. A substrate-binding site is contributed by Tyr292.

Belongs to the 4-hydroxy-2-oxovalerate aldolase family. As to quaternary structure, homodimer. Can also form a heterotetramer composed of two aldolase (TTHB246) and two dehydrogenase (TTHB247) subunits. Upon complex formation, the aldolase shows a 5-fold increase in substrate affinity, while the dehydrogenase shows a 3-fold decrease; the kcat values of each enzyme are reduced by 2-fold when they are in a complex. Co(2+) is required as a cofactor. The cofactor is Ni(2+). Mn(2+) serves as cofactor.

The catalysed reaction is (S)-4-hydroxy-2-oxopentanoate = acetaldehyde + pyruvate. It catalyses the reaction (S)-4-hydroxy-2-oxohexanoate = propanal + pyruvate. Its activity is regulated as follows. Appears to be allosterically activated by NADH. Its function is as follows. Catalyzes the retro-aldol cleavage of both 4-hydroxy-2-oxopentanoate (HOPA) and 4-hydroxy-2-oxohexanoate (HOHA) to pyruvate and acetaldehyde or propanaldehyde, respectively. The aldehydes produced by this reaction are directly channeled to the dehydrogenase TTHB247, ensuring that these toxic aldehydes are sequestered from cellular components. Is involved in the meta-cleavage pathway for the degradation of aromatic compounds. Appears to be stereospecific since it can cleave (4S)-4-hydroxy-2-oxopentanoate but not the (4R) isomer. Is not able to catalyze the aldol addition of 2-oxobutyrate with acetaldehyde; this indicates that the enzyme is specific for pyruvate as the carbonyl donor. The polypeptide is 4-hydroxy-2-oxovalerate aldolase (Thermus thermophilus (strain ATCC 27634 / DSM 579 / HB8)).